The sequence spans 580 residues: FAD-dependent monooxygenase yanF (580 aa).

Residues 1–21 (MSSSAECRPIGWGGWGPDPNT) are disordered. In terms of domain architecture, FAD-binding PCMH-type spans 150-322 (CRLNASCIVT…VEYDLTTNTG (173 aa)). His187 carries the post-translational modification Pros-8alpha-FAD histidine.

It belongs to the oxygen-dependent FAD-linked oxidoreductase family.

It functions in the pathway secondary metabolite biosynthesis; terpenoid biosynthesis. Functionally, FAD-dependent monooxygenase; part of the gene cluster that mediates the biosynthesis of yanuthone D, a fungal isoprenoid epoxycyclohexenone that acts as an antibiotic against fungi and bacteria. The first step of the pathway is the synthesis of 6-methylsalicylic acid (6-MSA) by the polyketide synthase yanA. 6-MSA is then converted to m-cresol by the decarboxylase yanB. The cytochrome P450 monooxygenase yanC then catalyzes the oxidation of m-cresol to toluquinol. Epoxidation of toluquinol is then performed by the short chain dehydrogenase yanD, with the help of yanE, and a further prenylated by yanG leads to 7-deacetoxyyanuthone A. The next step is the hydroxylation of C-22 of 7-deacetoxyyanuthone A by the cytochrome P450 monooxygenase yanH to yield 22-deacetylyanuthone A. O-Mevalon transferase yanI then attaches mevalon to the hydroxyl group of 22-deacetylyanuthone A to produce yanuthone E. Finally, the FAD-dependent monooxygenase yanF oxidizes the hydroxyl group at C15 of yanuthone E to form yanuthone D. Furthermore, several branching points in the pathway lead to the production of yanuthones F and G from 7-deacetoxyyanuthone A; yanuthones H and I from 22-deacetylyanuthone A; and yanuthone J from yanuthone E. The chain is FAD-dependent monooxygenase yanF from Aspergillus niger (strain ATCC 1015 / CBS 113.46 / FGSC A1144 / LSHB Ac4 / NCTC 3858a / NRRL 328 / USDA 3528.7).